The following is a 399-amino-acid chain: Probable protein phosphatase 2C 28 (399 aa).

In terms of domain architecture, PPM-type phosphatase spans 48–356 (EFSMAVVQAN…DDITVIVVFL (309 aa)). 4 residues coordinate Mn(2+): Asp87, Gly88, Asp288, and Asp347.

Belongs to the PP2C family. The cofactor is Mg(2+). Requires Mn(2+) as cofactor.

It carries out the reaction O-phospho-L-seryl-[protein] + H2O = L-seryl-[protein] + phosphate. The enzyme catalyses O-phospho-L-threonyl-[protein] + H2O = L-threonyl-[protein] + phosphate. The sequence is that of Probable protein phosphatase 2C 28 from Oryza sativa subsp. japonica (Rice).